The sequence spans 908 residues: Zinc finger CCCH domain-containing protein 41 (908 aa).

Polar residues predominate over residues 1–13 (MELSVSSPKQSVL). The tract at residues 1–124 (MELSVSSPKQ…GRGNYGSWAQ (124 aa)) is disordered. Residues 20 to 34 (SDPEEEHEISEEEDD) show a composition bias toward acidic residues. 2 stretches are compositionally biased toward polar residues: residues 48-59 (SQSLEQDSSDQA) and 90-105 (GQRV…SNPM). The C3H1-type zinc finger occupies 200 to 228 (GIPRQRCRDFEERGFCLRGDMCPMEHGMN). The interval 333–375 (NVAPLDDSNQDAAENGCGIRDSRSTSQSVWGRMKGSNSQANSK) is disordered. Positions 356–373 (STSQSVWGRMKGSNSQAN) are enriched in polar residues. Positions 438 to 510 (RTLFVNYVPH…RFIKLWWANR (73 aa)) constitute an RRM domain. Disordered stretches follow at residues 558–590 (PTFQ…LQQK), 629–695 (VVKR…KQRP), and 807–908 (RESN…QIHQ). A compositionally biased stretch (polar residues) spans 559 to 588 (TFQTGGAPSSSEQPKPVVVTTSGPKVTPLQ). Positions 587–630 (LQQKKADTLERLKETLRKKQEMLEQKRNEYRKKLATLEKQGTVV) form a coiled coil. Positions 630–647 (VKREEADEPDAKRVKLDT) are enriched in basic and acidic residues. Ser-657 carries the phosphoserine modification. Polar residues predominate over residues 677 to 688 (AKLSTETPSPDS). A compositionally biased stretch (low complexity) spans 807–828 (RESNNNNNNSNSLSVSRDNLSS). Residues 846-863 (KTSSTEEPENTNVSGDND) are compositionally biased toward polar residues. Positions 865–886 (TLDKQETKESDNDNNKSNHESI) are enriched in basic and acidic residues. Acidic residues predominate over residues 898 to 908 (TDEEQSEQIHQ).

This Arabidopsis thaliana (Mouse-ear cress) protein is Zinc finger CCCH domain-containing protein 41.